Consider the following 406-residue polypeptide: Tryptophan synthase beta chain (406 aa).

At K99 the chain carries N6-(pyridoxal phosphate)lysine.

Belongs to the TrpB family. In terms of assembly, tetramer of two alpha and two beta chains. Pyridoxal 5'-phosphate is required as a cofactor.

It carries out the reaction (1S,2R)-1-C-(indol-3-yl)glycerol 3-phosphate + L-serine = D-glyceraldehyde 3-phosphate + L-tryptophan + H2O. Its pathway is amino-acid biosynthesis; L-tryptophan biosynthesis; L-tryptophan from chorismate: step 5/5. Its function is as follows. The beta subunit is responsible for the synthesis of L-tryptophan from indole and L-serine. The polypeptide is Tryptophan synthase beta chain (Allorhizobium ampelinum (strain ATCC BAA-846 / DSM 112012 / S4) (Agrobacterium vitis (strain S4))).